We begin with the raw amino-acid sequence, 380 residues long: Cytochrome b (380 aa).

4 helical membrane-spanning segments follow: residues 34–54 (FGSL…LLAM), 78–99 (WLIR…YLHI), 114–134 (WNTG…GYVL), and 179–199 (FFAL…IHLT). Residues His-84 and His-98 each coordinate heme b. Heme b-binding residues include His-183 and His-197. His-202 serves as a coordination point for a ubiquinone. The next 4 helical transmembrane spans lie at 227 to 247 (LKDI…ALFS), 289 to 309 (LGGV…PFLH), 321 to 341 (LSQL…WVGS), and 348 to 368 (FIII…ILFP).

Belongs to the cytochrome b family. The cytochrome bc1 complex contains 11 subunits: 3 respiratory subunits (MT-CYB, CYC1 and UQCRFS1), 2 core proteins (UQCRC1 and UQCRC2) and 6 low-molecular weight proteins (UQCRH/QCR6, UQCRB/QCR7, UQCRQ/QCR8, UQCR10/QCR9, UQCR11/QCR10 and a cleavage product of UQCRFS1). This cytochrome bc1 complex then forms a dimer. Heme b is required as a cofactor.

It is found in the mitochondrion inner membrane. Its function is as follows. Component of the ubiquinol-cytochrome c reductase complex (complex III or cytochrome b-c1 complex) that is part of the mitochondrial respiratory chain. The b-c1 complex mediates electron transfer from ubiquinol to cytochrome c. Contributes to the generation of a proton gradient across the mitochondrial membrane that is then used for ATP synthesis. This chain is Cytochrome b (MT-CYB), found in Macronectes giganteus (Southern giant petrel).